The following is a 449-amino-acid chain: Phosphoglucosamine mutase (449 aa).

Ser-105 acts as the Phosphoserine intermediate in catalysis. Mg(2+) contacts are provided by Ser-105, Asp-242, Asp-244, and Asp-246. Ser-105 is modified (phosphoserine).

The protein belongs to the phosphohexose mutase family. It depends on Mg(2+) as a cofactor. Activated by phosphorylation.

The enzyme catalyses alpha-D-glucosamine 1-phosphate = D-glucosamine 6-phosphate. Its function is as follows. Catalyzes the conversion of glucosamine-6-phosphate to glucosamine-1-phosphate. The chain is Phosphoglucosamine mutase from Clavibacter sepedonicus (Clavibacter michiganensis subsp. sepedonicus).